Reading from the N-terminus, the 225-residue chain is MALDLLRSSLGFLTTLPVKGDVDVLRRNLWVFSFVGIFIGSVISIPAVLGFWFLCVLLYVAIEGVNHIDGLADFGDAFFAPEERKKVAIKDLNLGTGGAVFLCVYFLILFYSFQRVSAFYIIFSQVLAKFSMLLLLTTSKPAWQGMTGFMMEFARKRDVVIGSLPLLLVVLKPLAVFPLLFAITISLLVKRYAEEKFGGVSGDVVGASNCLVFAGSLLVCYFLAD.

A run of 5 helical transmembrane segments spans residues 34-54 (FVGI…FWFL), 93-113 (NLGT…FYSF), 116-136 (VSAF…LLLL), 165-185 (PLLL…AITI), and 204-224 (VVGA…YFLA).

This sequence belongs to the CobS family. Mg(2+) is required as a cofactor.

The protein resides in the cell membrane. It carries out the reaction alpha-ribazole + adenosylcob(III)inamide-GDP = adenosylcob(III)alamin + GMP + H(+). The enzyme catalyses alpha-ribazole 5'-phosphate + adenosylcob(III)inamide-GDP = adenosylcob(III)alamin 5'-phosphate + GMP + H(+). Its pathway is cofactor biosynthesis; adenosylcobalamin biosynthesis; adenosylcobalamin from cob(II)yrinate a,c-diamide: step 7/7. Functionally, joins adenosylcobinamide-GDP and alpha-ribazole to generate adenosylcobalamin (Ado-cobalamin). Also synthesizes adenosylcobalamin 5'-phosphate from adenosylcobinamide-GDP and alpha-ribazole 5'-phosphate. This is Adenosylcobinamide-GDP ribazoletransferase (cobS1) from Archaeoglobus fulgidus (strain ATCC 49558 / DSM 4304 / JCM 9628 / NBRC 100126 / VC-16).